Consider the following 42-residue polypeptide: Envelope protein P10 (42 aa).

A helical transmembrane segment spans residues 20-40 (TTAAKIAVVYALVGLVGGLLL).

The protein localises to the virion membrane. Involved in cell lysis. The protein is Envelope protein P10 (P10) of Pseudomonas savastanoi pv. phaseolicola (Pseudomonas syringae pv. phaseolicola).